Here is a 462-residue protein sequence, read N- to C-terminus: Exodeoxyribonuclease 7 large subunit (462 aa).

Belongs to the XseA family. In terms of assembly, heterooligomer composed of large and small subunits.

It is found in the cytoplasm. The catalysed reaction is Exonucleolytic cleavage in either 5'- to 3'- or 3'- to 5'-direction to yield nucleoside 5'-phosphates.. Bidirectionally degrades single-stranded DNA into large acid-insoluble oligonucleotides, which are then degraded further into small acid-soluble oligonucleotides. This chain is Exodeoxyribonuclease 7 large subunit, found in Pectobacterium atrosepticum (strain SCRI 1043 / ATCC BAA-672) (Erwinia carotovora subsp. atroseptica).